The sequence spans 155 residues: S-ribosylhomocysteine lyase (155 aa).

His58, His62, and Cys125 together coordinate Fe cation.

The protein belongs to the LuxS family. As to quaternary structure, homodimer. Fe cation serves as cofactor.

It carries out the reaction S-(5-deoxy-D-ribos-5-yl)-L-homocysteine = (S)-4,5-dihydroxypentane-2,3-dione + L-homocysteine. In terms of biological role, involved in the synthesis of autoinducer 2 (AI-2) which is secreted by bacteria and is used to communicate both the cell density and the metabolic potential of the environment. The regulation of gene expression in response to changes in cell density is called quorum sensing. Catalyzes the transformation of S-ribosylhomocysteine (RHC) to homocysteine (HC) and 4,5-dihydroxy-2,3-pentadione (DPD). This is S-ribosylhomocysteine lyase from Helicobacter pylori (strain Shi470).